The primary structure comprises 283 residues: Pantothenate synthetase (283 aa).

30 to 37 provides a ligand contact to ATP; that stretch reads MGYFHEGH. His-37 serves as the catalytic Proton donor. Gln-61 contacts (R)-pantoate. Gln-61 provides a ligand contact to beta-alanine. Residue 147 to 150 participates in ATP binding; sequence GEKD. Residue Gln-153 participates in (R)-pantoate binding. ATP contacts are provided by residues Val-176 and 184–187; that span reads MSSR.

The protein belongs to the pantothenate synthetase family. Homodimer.

The protein localises to the cytoplasm. It carries out the reaction (R)-pantoate + beta-alanine + ATP = (R)-pantothenate + AMP + diphosphate + H(+). Its pathway is cofactor biosynthesis; (R)-pantothenate biosynthesis; (R)-pantothenate from (R)-pantoate and beta-alanine: step 1/1. In terms of biological role, catalyzes the condensation of pantoate with beta-alanine in an ATP-dependent reaction via a pantoyl-adenylate intermediate. The protein is Pantothenate synthetase of Syntrophobacter fumaroxidans (strain DSM 10017 / MPOB).